The following is a 447-amino-acid chain: Adenylosuccinate synthetase (447 aa).

GTP-binding positions include 12 to 18 and 40 to 42; these read GDEGKGK and GHT. D13 acts as the Proton acceptor in catalysis. D13 and G40 together coordinate Mg(2+). IMP is bound by residues 13-16, 38-41, T128, R142, Q223, T238, and R302; these read DEGK and NAGH. H41 serves as the catalytic Proton donor. Residue 298-304 coordinates substrate; the sequence is TTTGRKR. GTP is bound by residues R304, 330 to 332, and 412 to 414; these read KLD and SLG.

Belongs to the adenylosuccinate synthetase family. In terms of assembly, homodimer. The cofactor is Mg(2+).

It localises to the cytoplasm. The catalysed reaction is IMP + L-aspartate + GTP = N(6)-(1,2-dicarboxyethyl)-AMP + GDP + phosphate + 2 H(+). It functions in the pathway purine metabolism; AMP biosynthesis via de novo pathway; AMP from IMP: step 1/2. In terms of biological role, plays an important role in the de novo pathway of purine nucleotide biosynthesis. Catalyzes the first committed step in the biosynthesis of AMP from IMP. This is Adenylosuccinate synthetase from Nostoc punctiforme (strain ATCC 29133 / PCC 73102).